Reading from the N-terminus, the 523-residue chain is Nuclear receptor ROR-alpha (523 aa).

Positions 1–26 (MESAPAAPDPAASEPGSSGSEAAAGS) are enriched in low complexity. Residues 1–63 (MESAPAAPDP…SRGISVTKKT (63 aa)) form a disordered region. Lys-38 is modified (N6-methyllysine). 2 consecutive NR C4-type zinc fingers follow at residues 73–93 (CKICGDKSSGIHYGVITCEGC) and 109–133 (CPRQKNCLIDRTSRNRCQHCRLQKC). The nuclear receptor DNA-binding region spans 73–138 (CKICGDKSSG…RLQKCLAVGM (66 aa)). The segment at 154–183 (DSLYAEVQKHRMQQQQRDHQQQPGEAEPLT) is disordered. Thr-183 bears the Phosphothreonine; by MAPK1 mark. A Glycyl lysine isopeptide (Lys-Gly) (interchain with G-Cter in SUMO) cross-link involves residue Lys-240. The NR LBD domain maps to 272-510 (ELEHLAQNIS…LHFPPLYKEL (239 aa)). Residues 506-511 (LYKELF) carry the AF-2 motif.

This sequence belongs to the nuclear hormone receptor family. NR1 subfamily. Monomer. Interacts (via the DNA-binding domain) with HIF1A; the interaction enhances HIF1A transcription under hypoxia through increasing protein stability. Interacts with CEBPB; the interaction disrupts the interaction CEBPB:EP300. Interacts with the coactivators NCOA2, PPARGC1A (via LXXLL motif), EP300 and MED1. Interacts with the corepressor NCOR1. Interacts with MAGED1 and CTNNB1. Interacts with CRY1 and PER2. Interacts (via AF-2 motif) with PROX1. Interacts with NRIP1. Isoform 4 interacts (via AF-2 motif) with isoform 1 of FOXP3 (via LXXLL motif). Phosphorylation by conventional PKCs in neurons inhibits transcriptional activity. Phosphorylated on Thr-183 by MAPK1/ERK1 in vitro. Post-translationally, sumoylated by SENP1 and SENP2. Sumoylation, promoted by PIAS2, PIAS3, PIAS4 but not PIAS1, enhances the transcriptional activity. Desumoylated by SENP1. In terms of processing, ubiquitinated, leading to its degradation by the proteasome. Proteasomal degradation is required for efficient transcriptional activity and is prevented by HR. Monomethylated at Lys-38 by EZH2, this creates a degron recognized by a DCX (DDB1-DCAF1/VPRBP-CUL4A-RBX1) E3 ubiquitin ligase complex. Expressed in cerebellum, heart, liver, lung, kidney, retina and brown and white adipose tissues. Expressed in the subset of mature Th17 cells.

It localises to the nucleus. In terms of biological role, nuclear receptor that binds DNA as a monomer to ROR response elements (RORE) containing a single core motif half-site 5'-AGGTCA-3' preceded by a short A-T-rich sequence. Key regulator of embryonic development, cellular differentiation, immunity, circadian rhythm as well as lipid, steroid, xenobiotics and glucose metabolism. Considered to have intrinsic transcriptional activity, have some natural ligands like oxysterols that act as agonists (25-hydroxycholesterol) or inverse agonists (7-oxygenated sterols), enhancing or repressing the transcriptional activity, respectively. Recruits distinct combinations of cofactors to target genes regulatory regions to modulate their transcriptional expression, depending on the tissue, time and promoter contexts. Regulates genes involved in photoreceptor development including OPN1SW, OPN1SM and ARR3 and skeletal muscle development with MYOD1. Required for proper cerebellum development, regulates SHH gene expression, among others, to induce granule cells proliferation as well as expression of genes involved in calcium-mediated signal transduction. Regulates the circadian expression of several clock genes, including CLOCK, BMAL1, NPAS2 and CRY1. Competes with NR1D1 for binding to their shared DNA response element on some clock genes such as BMAL1, CRY1 and NR1D1 itself, resulting in NR1D1-mediated repression or RORA-mediated activation of clock genes expression, leading to the circadian pattern of clock genes expression. Therefore influences the period length and stability of the clock. Regulates genes involved in lipid metabolism such as apolipoproteins APOA1, APOA5, APOC3 and PPARG. In liver, has specific and redundant functions with RORC as positive or negative modulator of expression of genes encoding phase I and phase II proteins involved in the metabolism of lipids, steroids and xenobiotics, such as CYP7B1 and SULT2A1. Induces a rhythmic expression of some of these genes. In addition, interplays functionally with NR1H2 and NR1H3 for the regulation of genes involved in cholesterol metabolism. Also involved in the regulation of hepatic glucose metabolism through the modulation of G6PC1 and PCK1. In adipose tissue, plays a role as negative regulator of adipocyte differentiation, probably acting through dual mechanisms. May suppress CEBPB-dependent adipogenesis through direct interaction and PPARG-dependent adipogenesis through competition for DNA-binding. Downstream of IL6 and TGFB and synergistically with RORC isoform 2, is implicated in the lineage specification of uncommitted CD4(+) T-helper (T(H)) cells into T(H)17 cells, antagonizing the T(H)1 program. Probably regulates IL17 and IL17F expression on T(H) by binding to the essential enhancer conserved non-coding sequence 2 (CNS2) in the IL17-IL17F locus. Involved in hypoxia signaling by interacting with and activating the transcriptional activity of HIF1A. May inhibit cell growth in response to cellular stress. May exert an anti-inflammatory role by inducing CHUK expression and inhibiting NF-kappa-B signaling. The sequence is that of Nuclear receptor ROR-alpha (Rora) from Mus musculus (Mouse).